We begin with the raw amino-acid sequence, 248 residues long: tRNA (guanine-N(1)-)-methyltransferase (248 aa).

S-adenosyl-L-methionine is bound by residues Gly113 and 133 to 138 (IGDYVL).

This sequence belongs to the RNA methyltransferase TrmD family. In terms of assembly, homodimer.

Its subcellular location is the cytoplasm. The catalysed reaction is guanosine(37) in tRNA + S-adenosyl-L-methionine = N(1)-methylguanosine(37) in tRNA + S-adenosyl-L-homocysteine + H(+). Specifically methylates guanosine-37 in various tRNAs. This chain is tRNA (guanine-N(1)-)-methyltransferase, found in Shewanella denitrificans (strain OS217 / ATCC BAA-1090 / DSM 15013).